The following is an 876-amino-acid chain: Protein TORMOZ EMBRYO DEFECTIVE (876 aa).

WD repeat units follow at residues Gly-58 to Ser-97, Gly-100 to Tyr-139, Gly-142 to Lys-183, Lys-190 to Thr-229, Leu-255 to Glu-294, Glu-308 to Glu-347, Gly-356 to Val-396, Gly-399 to Val-441, Gly-444 to Glu-484, Ala-497 to Thr-536, Gly-539 to Glu-580, Gly-581 to Thr-620, and Gln-623 to Asp-662. A disordered region spans residues Val-816 to Val-876. Positions Glu-819–Val-831 are enriched in basic and acidic residues. Positions Ser-848–Lys-855 match the Nuclear localization signal motif. The segment covering Arg-849–Arg-864 has biased composition (basic residues).

Preferentially expressed in dividing cells in a variety of tissues and meristematic regions.

Its subcellular location is the nucleus. The protein resides in the nucleolus. Its function is as follows. Essential protein involved in the regulation of cell division planes during embryogenesis which defines cell patterning, especially longitudinal division planes of the proembryo, probably via the regulation of embryo patterning genes expression patterns. The polypeptide is Protein TORMOZ EMBRYO DEFECTIVE (Arabidopsis thaliana (Mouse-ear cress)).